We begin with the raw amino-acid sequence, 100 residues long: MKLTPREKDKLLIFTAALLAERRRARGLKLNYPEAIAFITAALMEAARDGKTVAEVMHYGTTLLTRDDVMDGVPEMIPDIQVEATFPDGTKLVTVHHPIP.

It belongs to the urease gamma subunit family. As to quaternary structure, heterotrimer of UreA (gamma), UreB (beta) and UreC (alpha) subunits. Three heterotrimers associate to form the active enzyme.

The protein localises to the cytoplasm. The catalysed reaction is urea + 2 H2O + H(+) = hydrogencarbonate + 2 NH4(+). It participates in nitrogen metabolism; urea degradation; CO(2) and NH(3) from urea (urease route): step 1/1. The protein is Urease subunit gamma of Burkholderia orbicola (strain MC0-3).